The sequence spans 318 residues: NADH-ubiquinone oxidoreductase chain 1 (318 aa).

8 consecutive transmembrane segments (helical) span residues phenylalanine 2–leucine 22, methionine 70–proline 90, leucine 100–glycine 120, leucine 146–isoleucine 166, histidine 171–alanine 191, leucine 222–phenylalanine 242, leucine 254–serine 276, and leucine 294–isoleucine 314.

Belongs to the complex I subunit 1 family. Core subunit of respiratory chain NADH dehydrogenase (Complex I) which is composed of 45 different subunits.

Its subcellular location is the mitochondrion inner membrane. The catalysed reaction is a ubiquinone + NADH + 5 H(+)(in) = a ubiquinol + NAD(+) + 4 H(+)(out). Core subunit of the mitochondrial membrane respiratory chain NADH dehydrogenase (Complex I) which catalyzes electron transfer from NADH through the respiratory chain, using ubiquinone as an electron acceptor. Essential for the catalytic activity and assembly of complex I. This chain is NADH-ubiquinone oxidoreductase chain 1 (MT-ND1), found in Ceratotherium simum (White rhinoceros).